Reading from the N-terminus, the 209-residue chain is Kynurenine formamidase (209 aa).

Residue Trp-20 participates in substrate binding. Zn(2+) is bound by residues His-50, His-54, and Asp-56. His-60 serves as the catalytic Proton donor/acceptor. Zn(2+)-binding residues include His-161 and Glu-173.

The protein belongs to the Cyclase 1 superfamily. KynB family. Homodimer. Requires Zn(2+) as cofactor.

It catalyses the reaction N-formyl-L-kynurenine + H2O = L-kynurenine + formate + H(+). Its pathway is amino-acid degradation; L-tryptophan degradation via kynurenine pathway; L-kynurenine from L-tryptophan: step 2/2. In terms of biological role, catalyzes the hydrolysis of N-formyl-L-kynurenine to L-kynurenine, the second step in the kynurenine pathway of tryptophan degradation. This chain is Kynurenine formamidase, found in Bacillus anthracis.